The chain runs to 174 residues: ATP synthase subunit delta, sodium ion specific (174 aa).

Belongs to the ATPase delta chain family. F-type ATPases have 2 components, F(1) - the catalytic core - and F(0) - the membrane proton channel. F(1) has five subunits: alpha(3), beta(3), gamma(1), delta(1), epsilon(1). F(0) has three main subunits: a(1), b(2) and c(10-14). The alpha and beta chains form an alternating ring which encloses part of the gamma chain. F(1) is attached to F(0) by a central stalk formed by the gamma and epsilon chains, while a peripheral stalk is formed by the delta and b chains.

It localises to the cell inner membrane. In terms of biological role, f(1)F(0) ATP synthase produces ATP from ADP in the presence of a proton or sodium gradient. F-type ATPases consist of two structural domains, F(1) containing the extramembraneous catalytic core and F(0) containing the membrane proton channel, linked together by a central stalk and a peripheral stalk. During catalysis, ATP synthesis in the catalytic domain of F(1) is coupled via a rotary mechanism of the central stalk subunits to proton translocation. Functionally, this protein is part of the stalk that links CF(0) to CF(1). It either transmits conformational changes from CF(0) to CF(1) or is implicated in proton conduction. In Ilyobacter tartaricus, this protein is ATP synthase subunit delta, sodium ion specific.